Reading from the N-terminus, the 65-residue chain is Conotoxin tx3c (65 aa).

The N-terminal stretch at 1-19 is a signal peptide; it reads MFKLGVLLTICLLLFSLNA. Positions 20–50 are excised as a propeptide; that stretch reads VPLDGDQPADQPAERLLDDISFENNPFYDPA. 3 cysteine pairs are disulfide-bonded: cysteine 53–cysteine 64, cysteine 54–cysteine 60, and cysteine 57–cysteine 63. Proline 62 is modified (4-hydroxyproline; partial). A Cysteine amide modification is found at cysteine 64.

The hydroxylation at Pro-62 is observed in PubMed:15924437, PubMed:19380747 and PubMed:22709442, and the non-hydroxylation is described in PubMed:22709442. As to expression, expressed by the venom duct.

The protein localises to the secreted. Functionally, causes scratching in mice. This chain is Conotoxin tx3c, found in Conus textile (Cloth-of-gold cone).